A 344-amino-acid chain; its full sequence is DNA-directed RNA polymerase subunit alpha (344 aa).

Residues 1–246 are alpha N-terminal domain (alpha-NTD); it reads MLVEKFLKDF…EFLFPLVDFE (246 aa). The segment at 259 to 344 is alpha C-terminal domain (alpha-CTD); that stretch reads ESSNLLDMSI…VLSKNVKISE (86 aa).

It belongs to the RNA polymerase alpha chain family. Homodimer. The RNAP catalytic core consists of 2 alpha, 1 beta, 1 beta' and 1 omega subunit. When a sigma factor is associated with the core the holoenzyme is formed, which can initiate transcription.

It carries out the reaction RNA(n) + a ribonucleoside 5'-triphosphate = RNA(n+1) + diphosphate. Functionally, DNA-dependent RNA polymerase catalyzes the transcription of DNA into RNA using the four ribonucleoside triphosphates as substrates. The sequence is that of DNA-directed RNA polymerase subunit alpha from Borreliella burgdorferi (strain ATCC 35210 / DSM 4680 / CIP 102532 / B31) (Borrelia burgdorferi).